Here is a 574-residue protein sequence, read N- to C-terminus: Methionine--tRNA ligase (574 aa).

The short motif at 11-21 is the 'HIGH' region element; sequence PYINGIKHLGN. 4 residues coordinate Zn(2+): Cys143, Cys146, Cys156, and Cys159. Positions 345-349 match the 'KMSKS' region motif; the sequence is KFSTS. Thr348 lines the ATP pocket.

It belongs to the class-I aminoacyl-tRNA synthetase family. MetG type 1 subfamily. As to quaternary structure, monomer. Zn(2+) is required as a cofactor.

The protein resides in the cytoplasm. It catalyses the reaction tRNA(Met) + L-methionine + ATP = L-methionyl-tRNA(Met) + AMP + diphosphate. Is required not only for elongation of protein synthesis but also for the initiation of all mRNA translation through initiator tRNA(fMet) aminoacylation. In Streptomyces avermitilis (strain ATCC 31267 / DSM 46492 / JCM 5070 / NBRC 14893 / NCIMB 12804 / NRRL 8165 / MA-4680), this protein is Methionine--tRNA ligase.